Here is a 192-residue protein sequence, read N- to C-terminus: Fe/S biogenesis protein NfuA (192 aa).

[4Fe-4S] cluster-binding residues include Cys-149 and Cys-152.

It belongs to the NfuA family. In terms of assembly, homodimer. [4Fe-4S] cluster is required as a cofactor.

Functionally, involved in iron-sulfur cluster biogenesis. Binds a 4Fe-4S cluster, can transfer this cluster to apoproteins, and thereby intervenes in the maturation of Fe/S proteins. Could also act as a scaffold/chaperone for damaged Fe/S proteins. This Shewanella denitrificans (strain OS217 / ATCC BAA-1090 / DSM 15013) protein is Fe/S biogenesis protein NfuA.